The primary structure comprises 600 residues: Aspartate--tRNA(Asp/Asn) ligase (600 aa).

E175 provides a ligand contact to L-aspartate. The interval 199 to 202 is aspartate; it reads QLFK. L-aspartate is bound at residue R221. ATP is bound by residues 221-223 and Q230; that span reads RDE. L-aspartate is bound at residue H453. E487 lines the ATP pocket. Residue R494 participates in L-aspartate binding. Residue 539-542 coordinates ATP; the sequence is GWDR. The tract at residues 564-600 is disordered; the sequence is GGVDPLTDAPAPITPLQRKESGIDAKPKAAENKPEEK. Over residues 580–600 the composition is skewed to basic and acidic residues; sequence QRKESGIDAKPKAAENKPEEK.

Belongs to the class-II aminoacyl-tRNA synthetase family. Type 1 subfamily. In terms of assembly, homodimer.

The protein resides in the cytoplasm. It catalyses the reaction tRNA(Asx) + L-aspartate + ATP = L-aspartyl-tRNA(Asx) + AMP + diphosphate. In terms of biological role, aspartyl-tRNA synthetase with relaxed tRNA specificity since it is able to aspartylate not only its cognate tRNA(Asp) but also tRNA(Asn). Reaction proceeds in two steps: L-aspartate is first activated by ATP to form Asp-AMP and then transferred to the acceptor end of tRNA(Asp/Asn). The polypeptide is Aspartate--tRNA(Asp/Asn) ligase (Corynebacterium efficiens (strain DSM 44549 / YS-314 / AJ 12310 / JCM 11189 / NBRC 100395)).